Here is a 170-residue protein sequence, read N- to C-terminus: dCTP pyrophosphatase 1 (170 aa).

The disordered stretch occupies residues 1–25; that stretch reads MSTAGDGERGTVGQEDSAAARPFRF. An N-acetylserine modification is found at S2. The residue at position 2 (S2) is a Phosphoserine. Residues H38 and 47-51 contribute to the substrate site; that span reads WEQFH. Mg(2+)-binding residues include E63 and E66. W73 is a binding site for substrate. Residues E95 and D98 each coordinate Mg(2+). Position 102 (Y102) interacts with substrate. The disordered stretch occupies residues 150-170; that stretch reads SENQAVGAGDPASELRDQAST.

As to quaternary structure, homotetramer. The cofactor is Mg(2+). As to expression, ubiquitous. Highly expressed in heart, liver, skeletal muscle, cerebellum, brain, and salivary gland.

The protein localises to the cytoplasm. It is found in the cytosol. The enzyme catalyses dCTP + H2O = dCMP + diphosphate + H(+). With respect to regulation, inhibited by divalent calcium or cadmium ions. Hydrolyzes deoxynucleoside triphosphates (dNTPs) to the corresponding nucleoside monophosphates. Has a strong preference for dCTP and its analogs including 5-iodo-dCTP and 5-methyl-dCTP for which it may even have a higher efficiency. May protect DNA or RNA against the incorporation of these genotoxic nucleotide analogs through their catabolism. The chain is dCTP pyrophosphatase 1 from Mus musculus (Mouse).